Reading from the N-terminus, the 268-residue chain is Expansin-B3 (268 aa).

The N-terminal stretch at 1 to 25 (MAFSISKKAAVAALFSFLVVTCVAG) is a signal peptide. Residue Asn-30 is glycosylated (N-linked (GlcNAc...) asparagine). The Expansin-like EG45 domain maps to 62–168 (GGACGFKNTN…KRVPCNFPGL (107 aa)). Disulfide bonds link Cys-65–Cys-93, Cys-96–Cys-163, and Cys-101–Cys-107. The Expansin-like CBD domain maps to 181-262 (VYFAVLVEYE…NWAPMAVYRS (82 aa)). N-linked (GlcNAc...) asparagine glycosylation is present at Asn-238.

The protein belongs to the expansin family. Expansin B subfamily. In terms of tissue distribution, expressed in roots, coleoptiles and internodes.

It localises to the secreted. The protein resides in the cell wall. It is found in the membrane. In terms of biological role, may cause loosening and extension of plant cell walls by disrupting non-covalent bonding between cellulose microfibrils and matrix glucans. No enzymatic activity has been found. May be required for rapid internodal elongation in deepwater rice during submergence. The protein is Expansin-B3 (EXPB3) of Oryza sativa subsp. japonica (Rice).